A 648-amino-acid polypeptide reads, in one-letter code: Acetyl-coenzyme A synthetase (648 aa).

CoA is bound by residues 190–193 (RGGK), Thr308, and Asn332. ATP is bound by residues 384–386 (GEP), 408–413 (DTWWQT), Asp497, and Arg512. Ser520 is a CoA binding site. Arg523 is an ATP binding site. Mg(2+)-binding residues include Val534, His536, and Val539. A CoA-binding site is contributed by Arg581. N6-acetyllysine is present on Lys606.

This sequence belongs to the ATP-dependent AMP-binding enzyme family. Mg(2+) serves as cofactor. Post-translationally, acetylated. Deacetylation by the SIR2-homolog deacetylase activates the enzyme.

It catalyses the reaction acetate + ATP + CoA = acetyl-CoA + AMP + diphosphate. In terms of biological role, catalyzes the conversion of acetate into acetyl-CoA (AcCoA), an essential intermediate at the junction of anabolic and catabolic pathways. AcsA undergoes a two-step reaction. In the first half reaction, AcsA combines acetate with ATP to form acetyl-adenylate (AcAMP) intermediate. In the second half reaction, it can then transfer the acetyl group from AcAMP to the sulfhydryl group of CoA, forming the product AcCoA. This chain is Acetyl-coenzyme A synthetase, found in Bradyrhizobium diazoefficiens (strain JCM 10833 / BCRC 13528 / IAM 13628 / NBRC 14792 / USDA 110).